A 902-amino-acid polypeptide reads, in one-letter code: Leucine-rich repeat-containing G-protein coupled receptor 5 (902 aa).

The first 22 residues, 1–22 (MDTSKTSFFLFSVLCSLQLVGA), serve as a signal peptide directing secretion. Topologically, residues 23–558 (ARPGKQQRSC…HLFGSWLTRT (536 aa)) are extracellular. Intrachain disulfides connect Cys-32–Cys-38 and Cys-36–Cys-49. Residues 32–61 (CPTPCECEQEGMLVRVDCSDRALTSLPRNL) form the LRRNT domain. LRR repeat units follow at residues 41-61 (EGML…PRNL), 62-85 (SIFT…VMHN), 86-109 (LHFL…AFAG), 111-133 (GSLK…ALHN), 134-157 (LRSL…SFNG), 159-181 (FSLR…ALES), 182-205 (LSAL…AFRN), 207-229 (SSLV…CFDG), 230-253 (LHSL…IKTL), 254-276 (KNLK…AFIG), 278-300 (PSLI…AFQH), 302-324 (PELR…LTGT), 325-347 (TSLE…VCTQ), 348-372 (LPNL…GCQR), 374-393 (QKID…TFQQ), 394-417 (LVGL…SFSS), and 418-441 (LPSL…GLHG). N-linked (GlcNAc...) asparagine glycosylation is found at Asn-60 and Asn-74. N-linked (GlcNAc...) asparagine glycosylation occurs at Asn-205. An intrachain disulfide couples Cys-345 to Cys-370. An intrachain disulfide couples Cys-476 to Cys-537. Asn-496 carries an N-linked (GlcNAc...) asparagine glycan. A helical transmembrane segment spans residues 559–579 (GVWLIVLLSFVCNALVIATVF). Residues 580–589 (RPLSYVPSIK) lie on the Cytoplasmic side of the membrane. The helical transmembrane segment at 590-610 (LLIGLIAIMNTLMGLSSGVLA) threads the bilayer. An LRR 18 repeat occupies 598-619 (MNTLMGLSSGVLATVDALTFGN). Residues 611-634 (TVDALTFGNFAQYGAWWESGVGCQ) lie on the Extracellular side of the membrane. A disulfide bond links Cys-633 and Cys-708. The helical transmembrane segment at 635-655 (ITGFLSVFAAETSIFLLTVAA) threads the bilayer. The Cytoplasmic segment spans residues 656–678 (LERGFSIKCTTKFETKSSFINVK). The helical transmembrane segment at 679-699 (LSIVFCFLLSIVIAVSPLLSG) threads the bilayer. Residues 700–718 (STYGTSPLCFPLLFGDPSS) lie on the Extracellular side of the membrane. A helical membrane pass occupies residues 719–739 (MGFMVALVLLNSLCFLVMTIA). At 740 to 763 (YTKLYCSLEKGELENIWDCSMVKH) the chain is on the cytoplasmic side. The helical transmembrane segment at 764 to 784 (IALLLFTNCILYCPVAFLSFS) threads the bilayer. The Extracellular portion of the chain corresponds to 785-798 (SLLNLTFISPEVNK). Residues Asn-788 and Asn-797 are each glycosylated (N-linked (GlcNAc...) asparagine). Residues 799-819 (SILLLIIPLPACLNPLLYILF) form a helical membrane-spanning segment. The Cytoplasmic portion of the chain corresponds to 820-902 (NPHFKEDIGS…LSAVAFVPCH (83 aa)).

Belongs to the G-protein coupled receptor 1 family.

The protein localises to the cell membrane. It localises to the golgi apparatus. It is found in the trans-Golgi network membrane. Receptor for R-spondins that potentiates the canonical Wnt signaling pathway and acts as a stem cell marker of the intestinal epithelium and the hair follicle. Upon binding to R-spondins (RSPO1, RSPO2, RSPO3 or RSPO4), associates with phosphorylated LRP6 and frizzled receptors that are activated by extracellular Wnt receptors, triggering the canonical Wnt signaling pathway to increase expression of target genes. In contrast to classical G-protein coupled receptors, does not activate heterotrimeric G-proteins to transduce the signal. Involved in the development and/or maintenance of the adult intestinal stem cells during postembryonic development. The sequence is that of Leucine-rich repeat-containing G-protein coupled receptor 5 (lgr5) from Xenopus tropicalis (Western clawed frog).